The chain runs to 166 residues: PTS system glucose-specific EIIA component (166 aa).

Residues 36-140 form the PTS EIIA type-1 domain; it reads DVVFSEKIVG…SVLTPIVISN (105 aa). Residues histidine 73 and histidine 88 each coordinate Zn(2+). Histidine 88 acts as the Tele-phosphohistidine intermediate; for EIIA activity in catalysis. A Phosphohistidine; by HPr modification is found at histidine 88.

In terms of assembly, heterodimer with glycerol kinase (glpk). Zn(2+) is required as a cofactor.

It localises to the cytoplasm. In terms of biological role, the phosphoenolpyruvate-dependent sugar phosphotransferase system (sugar PTS), a major carbohydrate active transport system, catalyzes the phosphorylation of incoming sugar substrates concomitantly with their translocation across the cell membrane. The enzyme II complex composed of PtsG and Crr is involved in glucose transport. The sequence is that of PTS system glucose-specific EIIA component (crr) from Haemophilus influenzae (strain ATCC 51907 / DSM 11121 / KW20 / Rd).